We begin with the raw amino-acid sequence, 385 residues long: Phosphorylated adapter RNA export protein (385 aa).

The segment covering 1-18 (MALEAGDMEEGQLSDSDS) has biased composition (acidic residues). The interval 1 to 28 (MALEAGDMEEGQLSDSDSDMTVVPSDRP) is disordered. N-acetylalanine is present on Ala2. The necessary for interaction with CBP80 stretch occupies residues 2–320 (ALEAGDMEEG…KAARKRRTQL (319 aa)). Phosphoserine occurs at positions 14, 16, 56, 57, 60, and 63. The Nuclear localization signal signature appears at 71–74 (KRKR). The interval 75–101 (QKCHNTPPKPEPFPFGPSGQKTALNGG) is disordered. The Nuclear export signal signature appears at 120-129 (VATELGILGM). The segment covering 164–184 (KDLDEYMHGDKKPGSKEDENG) has biased composition (basic and acidic residues). The interval 164–192 (KDLDEYMHGDKKPGSKEDENGQGHLKRKR) is disordered. The short motif at 189–192 (KRKR) is the Nuclear localization signal element. The segment at 219 to 319 (EKVADEIAFR…KKAARKRRTQ (101 aa)) is sufficient for poly U RNA-binding. Residues 270–278 (GSRRRTPGG) form a necessary for poly U RNA-binding and snRNA export region. Thr287 carries the phosphothreonine modification. A disordered region spans residues 335 to 385 (QEDDDTSRETFASDTNEALASLDEAQEGPGETKLDAEEAIEVDHPQDLDIF). The span at 343-352 (ETFASDTNEA) shows a compositional bias: polar residues. Ser347 is modified (phosphoserine). Over residues 364-385 (GETKLDAEEAIEVDHPQDLDIF) the composition is skewed to basic and acidic residues.

The protein belongs to the PHAX family. Found in a U snRNA export complex with PHAX/RNUXA, NCBP1/CBP80, NCBP2/CBP20, RAN, XPO1 and m7G-capped RNA. Part of a precomplex with PHAX/RNUXA, NCBP1/CBP80, NCBP2/CBP20 and m7G-capped RNA. Interacts with NCBP1/CBP80. Found in a complex with snoRNA. Interacts with NCBP2/CBP20. Interacts with DDX39A; this interaction stimulates PHAX RNA binding activity. In terms of processing, phosphorylated in the nucleus. Dephosphorylated in the cytoplasm.

It localises to the nucleus. Its subcellular location is the nucleoplasm. The protein resides in the cajal body. The protein localises to the cytoplasm. Its function is as follows. A phosphoprotein adapter involved in the XPO1-mediated U snRNA export from the nucleus. Bridge components required for U snRNA export, the cap binding complex (CBC)-bound snRNA on the one hand and the GTPase Ran in its active GTP-bound form together with the export receptor XPO1 on the other. Its phosphorylation in the nucleus is required for U snRNA export complex assembly and export, while its dephosphorylation in the cytoplasm causes export complex disassembly. It is recycled back to the nucleus via the importin alpha/beta heterodimeric import receptor. The directionality of nuclear export is thought to be conferred by an asymmetric distribution of the GTP- and GDP-bound forms of Ran between the cytoplasm and nucleus. Its compartmentalized phosphorylation cycle may also contribute to the directionality of export. Binds strongly to m7G-capped U1 and U5 small nuclear RNAs (snRNAs) in a sequence-unspecific manner and phosphorylation-independent manner. Also plays a role in the biogenesis of U3 small nucleolar RNA (snoRNA). Involved in the U3 snoRNA transport from nucleoplasm to Cajal bodies. Binds strongly to m7G-capped U3, U8 and U13 precursor snoRNAs and weakly to trimethylated (TMG)-capped U3, U8 and U13 snoRNAs. Also binds to telomerase RNA. The sequence is that of Phosphorylated adapter RNA export protein (Phax) from Mus musculus (Mouse).